We begin with the raw amino-acid sequence, 398 residues long: MIIKPRVRGFICVTTHPAGCEANVRQQIGYVKAKGPIADGPKRVLVIGASTGYGLAARITAAFGCGAGTLGVFFERPGSESKPGSPGWYNTAAFHRAAAQEGLYAKSINGDGFSDDVKQKTIDAIREDLGQVDLVVYSLAAPRRIHPKTGEVFNSTLKPIGKAVSLRGLDTDNEVVKDTVLEPATQKEIDDTVAVMGGEDWQMWIDALQAAGVLADGAKTTAFTYLGERITHDIYWNGSIGAAKKDLDQKVLGIRAGLAAKGGDARVSVLKAVVTQASSAIPVMPLYLSLLFKVMKAEGTHEGCIEQVHGLFADSLCGSAPHLDEEGRLRADYKELSPQVQARVTALWPQVTSQNVRELTDLAGYKAEFLRLFGFGIEGVDYEADVNPDVGIPNLVQA.

NAD(+)-binding positions include 48–53 (GASTGY), 74–75 (FE), 111–112 (DG), and 139–140 (LA). Tyr225 provides a ligand contact to substrate. Tyr235 (proton donor) is an active-site residue. NAD(+) is bound by residues Lys244 and 273 to 275 (VVT).

The protein belongs to the TER reductase family. As to quaternary structure, monomer.

It catalyses the reaction a 2,3-saturated acyl-[ACP] + NAD(+) = a (2E)-enoyl-[ACP] + NADH + H(+). The protein operates within lipid metabolism; fatty acid biosynthesis. Its function is as follows. Involved in the final reduction of the elongation cycle of fatty acid synthesis (FAS II). Catalyzes the reduction of a carbon-carbon double bond in an enoyl moiety that is covalently linked to an acyl carrier protein (ACP). The protein is Enoyl-[acyl-carrier-protein] reductase [NADH] of Variovorax paradoxus (strain S110).